The chain runs to 227 residues: uncharacterized protein (227 aa).

A run of 3 helical transmembrane segments spans residues 109–128, 173–192, and 199–221; these read MCNV…FAGI, AILL…ILLT, and ALRV…VMMG.

It is found in the cell membrane. This is an uncharacterized protein from Archaeoglobus fulgidus (strain ATCC 49558 / DSM 4304 / JCM 9628 / NBRC 100126 / VC-16).